Here is a 188-residue protein sequence, read N- to C-terminus: ATP synthase subunit delta (188 aa).

Belongs to the ATPase delta chain family. F-type ATPases have 2 components, F(1) - the catalytic core - and F(0) - the membrane proton channel. F(1) has five subunits: alpha(3), beta(3), gamma(1), delta(1), epsilon(1). F(0) has three main subunits: a(1), b(2) and c(10-14). The alpha and beta chains form an alternating ring which encloses part of the gamma chain. F(1) is attached to F(0) by a central stalk formed by the gamma and epsilon chains, while a peripheral stalk is formed by the delta and b chains.

The protein localises to the cell inner membrane. Functionally, f(1)F(0) ATP synthase produces ATP from ADP in the presence of a proton or sodium gradient. F-type ATPases consist of two structural domains, F(1) containing the extramembraneous catalytic core and F(0) containing the membrane proton channel, linked together by a central stalk and a peripheral stalk. During catalysis, ATP synthesis in the catalytic domain of F(1) is coupled via a rotary mechanism of the central stalk subunits to proton translocation. This protein is part of the stalk that links CF(0) to CF(1). It either transmits conformational changes from CF(0) to CF(1) or is implicated in proton conduction. This chain is ATP synthase subunit delta, found in Sinorhizobium fredii (strain NBRC 101917 / NGR234).